The primary structure comprises 572 residues: Proline--tRNA ligase (572 aa).

It belongs to the class-II aminoacyl-tRNA synthetase family. ProS type 1 subfamily. As to quaternary structure, homodimer.

The protein localises to the cytoplasm. The catalysed reaction is tRNA(Pro) + L-proline + ATP = L-prolyl-tRNA(Pro) + AMP + diphosphate. Catalyzes the attachment of proline to tRNA(Pro) in a two-step reaction: proline is first activated by ATP to form Pro-AMP and then transferred to the acceptor end of tRNA(Pro). As ProRS can inadvertently accommodate and process non-cognate amino acids such as alanine and cysteine, to avoid such errors it has two additional distinct editing activities against alanine. One activity is designated as 'pretransfer' editing and involves the tRNA(Pro)-independent hydrolysis of activated Ala-AMP. The other activity is designated 'posttransfer' editing and involves deacylation of mischarged Ala-tRNA(Pro). The misacylated Cys-tRNA(Pro) is not edited by ProRS. The chain is Proline--tRNA ligase from Escherichia coli O17:K52:H18 (strain UMN026 / ExPEC).